The primary structure comprises 229 residues: Adenylate kinase (229 aa).

The propeptide occupies 1-9 (MLSTLAKRF). 25 to 30 (GVGKGT) serves as a coordination point for ATP. The interval 45 to 74 (STGDALRAEIRGQTPLGKRVKGIIESGGLV) is NMP. AMP is bound by residues threonine 46, arginine 51, 72–74 (GLV), 100–103 (GIPR), and glutamine 107. An LID region spans residues 141-178 (GRLFHPGSGRVYHKVTNPPKKPMTDDITGEPLIIRKDD). Position 142 (arginine 142) interacts with ATP. The AMP site is built by arginine 175 and arginine 186. Residue glycine 214 participates in ATP binding.

Belongs to the adenylate kinase family.

The protein resides in the hydrogenosome. The catalysed reaction is AMP + ATP = 2 ADP. Functionally, catalyzes the reversible transfer of the terminal phosphate group between ATP and AMP. Plays an important role in cellular energy homeostasis and in adenine nucleotide metabolism. The sequence is that of Adenylate kinase from Trichomonas vaginalis.